The following is a 269-amino-acid chain: 3-methyl-2-oxobutanoate hydroxymethyltransferase (269 aa).

Mg(2+) is bound by residues aspartate 51 and aspartate 90. Residues 51-52 (DS), aspartate 90, and lysine 120 each bind 3-methyl-2-oxobutanoate. Glutamate 122 contacts Mg(2+). Glutamate 187 acts as the Proton acceptor in catalysis.

Belongs to the PanB family. Homodecamer; pentamer of dimers. It depends on Mg(2+) as a cofactor.

It localises to the cytoplasm. The enzyme catalyses 3-methyl-2-oxobutanoate + (6R)-5,10-methylene-5,6,7,8-tetrahydrofolate + H2O = 2-dehydropantoate + (6S)-5,6,7,8-tetrahydrofolate. It participates in cofactor biosynthesis; (R)-pantothenate biosynthesis; (R)-pantoate from 3-methyl-2-oxobutanoate: step 1/2. Its function is as follows. Catalyzes the reversible reaction in which hydroxymethyl group from 5,10-methylenetetrahydrofolate is transferred onto alpha-ketoisovalerate to form ketopantoate. In Tropheryma whipplei (strain TW08/27) (Whipple's bacillus), this protein is 3-methyl-2-oxobutanoate hydroxymethyltransferase.